The primary structure comprises 377 residues: Nucleosome assembly protein 1;2 (377 aa).

The stretch at 26–80 forms a coiled coil; the sequence is VNVLKNKLHDLTGKHSNVTESLSPNVRKRVEALREIQTEHDELEAKFFEERAALE. A Nuclear export signal motif is present at residues 47–62; the sequence is LSPNVRKRVEALREIQ. The short motif at 223–228 is the Nuclear localization signal element; the sequence is KKKPKK. The interval 298–377 is disordered; that stretch reads EAAEDDYAEL…GERPPECKQQ (80 aa). Residues 299–342 are compositionally biased toward acidic residues; sequence AAEDDYAELEDDEDEDDDEEDDEDEDEEEEDEEDDEDEEEDEDE. The residue at position 374 (Cys-374) is a Cysteine methyl ester. Cys-374 carries the S-farnesyl cysteine lipid modification. Positions 375-377 are cleaved as a propeptide — removed in mature form; that stretch reads KQQ.

It belongs to the nucleosome assembly protein (NAP) family. Binds preferentially histone H1 in vitro. Interacts with CYCB1;1.

The protein localises to the nucleus. It localises to the cytoplasm. May modulate chromatin structure by regulation of nucleosome assembly/disassembly. Could function together with B-type cyclins in the regulation of microtubule dynamics. In Nicotiana tabacum (Common tobacco), this protein is Nucleosome assembly protein 1;2 (NAP1;2).